The following is a 392-amino-acid chain: G2/mitotic-specific cyclin-B2 (392 aa).

The protein belongs to the cyclin family. Cyclin AB subfamily. As to quaternary structure, interacts with the CDK1 protein kinase to form a serine/threonine kinase holoenzyme complex also known as maturation promoting factor (MPF). The cyclin subunit imparts substrate specificity to the complex.

Functionally, essential for the control of the cell cycle at the G2/M (mitosis) transition. In Rana japonica (Japanese reddish frog), this protein is G2/mitotic-specific cyclin-B2 (CCNB2).